Here is a 797-residue protein sequence, read N- to C-terminus: Homoaconitase, mitochondrial (797 aa).

The N-terminal 47 residues, methionine 1–tyrosine 47, are a transit peptide targeting the mitochondrion. Cysteine 404, cysteine 471, and cysteine 474 together coordinate [4Fe-4S] cluster.

This sequence belongs to the aconitase/IPM isomerase family. The cofactor is [4Fe-4S] cluster.

The protein localises to the mitochondrion. The catalysed reaction is (2R,3S)-homoisocitrate = cis-homoaconitate + H2O. The protein operates within amino-acid biosynthesis; L-lysine biosynthesis via AAA pathway; L-alpha-aminoadipate from 2-oxoglutarate: step 3/5. In terms of biological role, catalyzes the reversible hydration of cis-homoaconitate to (2R,3S)-homoisocitrate, a step in the alpha-aminoadipate pathway for lysine biosynthesis. The protein is Homoaconitase, mitochondrial (LYS4) of Chaetomium globosum (strain ATCC 6205 / CBS 148.51 / DSM 1962 / NBRC 6347 / NRRL 1970) (Soil fungus).